The following is a 321-amino-acid chain: tRNA uridine(34) hydroxylase (321 aa).

The region spanning 135 to 233 (DDPDTLVIDT…YLEQVPEEES (99 aa)) is the Rhodanese domain. Residue C193 is the Cysteine persulfide intermediate of the active site. The interval 301-321 (RQRQMDQLSSASSKKSDDFSL) is disordered.

This sequence belongs to the TrhO family.

The catalysed reaction is uridine(34) in tRNA + AH2 + O2 = 5-hydroxyuridine(34) in tRNA + A + H2O. Functionally, catalyzes oxygen-dependent 5-hydroxyuridine (ho5U) modification at position 34 in tRNAs. The protein is tRNA uridine(34) hydroxylase of Parasynechococcus marenigrum (strain WH8102).